The primary structure comprises 141 residues: Lutropin subunit beta (141 aa).

The N-terminal stretch at 1 to 20 is a signal peptide; that stretch reads MEMFQGLLLWLLLGVAGVWA. 6 cysteine pairs are disulfide-bonded: Cys29–Cys77, Cys43–Cys92, Cys46–Cys130, Cys54–Cys108, Cys58–Cys110, and Cys113–Cys120. A glycan (N-linked (GlcNAc...) asparagine) is linked at Asn33.

This sequence belongs to the glycoprotein hormones subunit beta family. Heterodimer of a common alpha chain and a unique beta chain which confers biological specificity to thyrotropin, lutropin, follitropin and gonadotropin.

The protein localises to the secreted. Functionally, promotes spermatogenesis and ovulation by stimulating the testes and ovaries to synthesize steroids. This is Lutropin subunit beta (LHB) from Bos taurus (Bovine).